The following is a 149-amino-acid chain: Small ribosomal subunit protein uS17c (149 aa).

The transit peptide at Met1 to Ala49 directs the protein to the chloroplast.

It belongs to the universal ribosomal protein uS17 family. As to quaternary structure, part of the 30S ribosomal subunit.

The protein localises to the plastid. It is found in the chloroplast. Functionally, one of the primary rRNA binding proteins, it binds specifically to the 5'-end of 16S ribosomal RNA. Required for optimal plastid performance in terms of photosynthesis and growth. Required for the translation of plastid mRNAs. Plays a critical role in biosynthesis of thylakoid membrane proteins encoded by chloroplast genes. The protein is Small ribosomal subunit protein uS17c (RPS17) of Arabidopsis thaliana (Mouse-ear cress).